We begin with the raw amino-acid sequence, 360 residues long: uncharacterized protein (360 aa).

Transmembrane regions (helical) follow at residues 12-32 (ILPLLIIVTFSVTSIVWITQI), 52-72 (VVLVLPTLLFILLPIITVIAV), 96-116 (IQLALPALYVALTIMLLAYYI), 278-298 (IIWPLYNFVLPCLALAVFLRY), 306-326 (FMPVLFSALTVLFVTAIHFIL), and 336-356 (FIFACYFNLLVALTIGLYLLV).

The protein localises to the cell membrane. This is an uncharacterized protein from Rickettsia prowazekii (strain Madrid E).